The primary structure comprises 503 residues: Probable cytosol aminopeptidase (503 aa).

Mn(2+)-binding residues include K274 and D279. The active site involves K286. Mn(2+) is bound by residues D297, D356, and E358. R360 is an active-site residue.

The protein belongs to the peptidase M17 family. Mn(2+) is required as a cofactor.

The protein resides in the cytoplasm. The catalysed reaction is Release of an N-terminal amino acid, Xaa-|-Yaa-, in which Xaa is preferably Leu, but may be other amino acids including Pro although not Arg or Lys, and Yaa may be Pro. Amino acid amides and methyl esters are also readily hydrolyzed, but rates on arylamides are exceedingly low.. It catalyses the reaction Release of an N-terminal amino acid, preferentially leucine, but not glutamic or aspartic acids.. Its function is as follows. Presumably involved in the processing and regular turnover of intracellular proteins. Catalyzes the removal of unsubstituted N-terminal amino acids from various peptides. The polypeptide is Probable cytosol aminopeptidase (Burkholderia multivorans (strain ATCC 17616 / 249)).